Reading from the N-terminus, the 824-residue chain is AMP deaminase 2 (824 aa).

Residues 1-43 (MASYPGPGKSKAKYPFKKRASLQASAAAPEARSGLGASPLQSA) form a disordered region. Over residues 10–20 (SKAKYPFKKRA) the composition is skewed to basic residues. Ser-21 carries the post-translational modification Phosphoserine. Residues 21-33 (SLQASAAAPEARS) show a composition bias toward low complexity. Residue Arg-44 is modified to Omega-N-methylarginine. 3 positions are modified to phosphoserine: Ser-45, Ser-63, and Ser-79. The residue at position 90 (Tyr-90) is a Phosphotyrosine. Residues Ser-96 and Ser-113 each carry the phosphoserine modification. Position 133 is a phosphothreonine (Thr-133). 2 positions are modified to phosphoserine: Ser-135 and Ser-137. Zn(2+)-binding residues include His-364 and His-366. Residues His-366 and 435–440 (KFNAKY) contribute to the substrate site. His-633 serves as a coordination point for Zn(2+). Glu-636 provides a ligand contact to substrate. The active-site Proton acceptor is the His-655. Residue Asp-710 participates in Zn(2+) binding. Residue 711 to 714 (DPLQ) participates in substrate binding.

Belongs to the metallo-dependent hydrolases superfamily. Adenosine and AMP deaminases family. In terms of assembly, homotetramer. It depends on Zn(2+) as a cofactor.

The catalysed reaction is AMP + H2O + H(+) = IMP + NH4(+). The protein operates within purine metabolism; IMP biosynthesis via salvage pathway; IMP from AMP: step 1/1. In terms of biological role, AMP deaminase plays a critical role in energy metabolism. Catalyzes the deamination of AMP to IMP and plays an important role in the purine nucleotide cycle. The polypeptide is AMP deaminase 2 (Rattus norvegicus (Rat)).